The following is a 508-amino-acid chain: Probable cytosol aminopeptidase (508 aa).

Positions 274 and 279 each coordinate Mn(2+). The active site involves Lys-286. Residues Asp-297, Asp-356, and Glu-358 each coordinate Mn(2+). Residue Arg-360 is part of the active site.

It belongs to the peptidase M17 family. The cofactor is Mn(2+).

It localises to the cytoplasm. It catalyses the reaction Release of an N-terminal amino acid, Xaa-|-Yaa-, in which Xaa is preferably Leu, but may be other amino acids including Pro although not Arg or Lys, and Yaa may be Pro. Amino acid amides and methyl esters are also readily hydrolyzed, but rates on arylamides are exceedingly low.. The catalysed reaction is Release of an N-terminal amino acid, preferentially leucine, but not glutamic or aspartic acids.. Its function is as follows. Presumably involved in the processing and regular turnover of intracellular proteins. Catalyzes the removal of unsubstituted N-terminal amino acids from various peptides. The protein is Probable cytosol aminopeptidase of Paraburkholderia phytofirmans (strain DSM 17436 / LMG 22146 / PsJN) (Burkholderia phytofirmans).